The sequence spans 430 residues: Glucose-6-phosphate isomerase (430 aa).

The Proton donor role is filled by glutamate 284. Active-site residues include histidine 305 and lysine 420.

It belongs to the GPI family.

Its subcellular location is the cytoplasm. The enzyme catalyses alpha-D-glucose 6-phosphate = beta-D-fructose 6-phosphate. The protein operates within carbohydrate biosynthesis; gluconeogenesis. It functions in the pathway carbohydrate degradation; glycolysis; D-glyceraldehyde 3-phosphate and glycerone phosphate from D-glucose: step 2/4. Functionally, catalyzes the reversible isomerization of glucose-6-phosphate to fructose-6-phosphate. This chain is Glucose-6-phosphate isomerase, found in Mycoplasma pneumoniae (strain ATCC 29342 / M129 / Subtype 1) (Mycoplasmoides pneumoniae).